A 573-amino-acid polypeptide reads, in one-letter code: Isocitrate dehydrogenase kinase/phosphatase (573 aa).

ATP contacts are provided by residues 318-324 and Lys339; that span reads APGVRGM. Asp374 is an active-site residue.

The protein belongs to the AceK family.

It localises to the cytoplasm. The enzyme catalyses L-seryl-[isocitrate dehydrogenase] + ATP = O-phospho-L-seryl-[isocitrate dehydrogenase] + ADP + H(+). Bifunctional enzyme which can phosphorylate or dephosphorylate isocitrate dehydrogenase (IDH) on a specific serine residue. This is a regulatory mechanism which enables bacteria to bypass the Krebs cycle via the glyoxylate shunt in response to the source of carbon. When bacteria are grown on glucose, IDH is fully active and unphosphorylated, but when grown on acetate or ethanol, the activity of IDH declines drastically concomitant with its phosphorylation. The chain is Isocitrate dehydrogenase kinase/phosphatase from Stutzerimonas stutzeri (strain A1501) (Pseudomonas stutzeri).